The sequence spans 434 residues: Serine protease HTRA2, mitochondrial (434 aa).

The disordered stretch occupies residues Y34 to D65. Low complexity predominate over residues S35–D60. The chain crosses the membrane as a helical span at residues L74–M92. The short motif at A85–S88 is the IAP-binding element. The serine protease stretch occupies residues S151–L314. Catalysis depends on charge relay system residues H169, D201, and S278. The 88-residue stretch at M337 to Q424 folds into the PDZ domain.

It belongs to the peptidase S1C family. In terms of assembly, interacts with th/DIAP1 (via BIR 2 domain).

It is found in the mitochondrion intermembrane space. It localises to the mitochondrion membrane. It carries out the reaction Cleavage of non-polar aliphatic amino-acids at the P1 position, with a preference for Val, Ile and Met. At the P2 and P3 positions, Arg is selected most strongly with a secondary preference for other hydrophilic residues.. Serine protease that shows proteolytic activity against a non-specific substrate beta-casein. Promotes or induces cell death either by direct binding to and inhibition of BIRC proteins (also called inhibitor of apoptosis proteins, IAPs), leading to an increase in caspase activity, or by a BIRC inhibition-independent, caspase-independent and serine protease activity-dependent mechanism. Can antagonize antiapoptotic activity of th/Diap1 by directly inducing the degradation of th/Diap1. The protein is Serine protease HTRA2, mitochondrial of Drosophila willistoni (Fruit fly).